A 353-amino-acid polypeptide reads, in one-letter code: O-antigen biosynthesis glycosyltransferase WclY (353 aa).

Residues 116–136 traverse the membrane as a helical segment; that stretch reads SLIWGLLWCSIWLFFDKLVIL. The UDP site is built by asparagine 190 and glutamate 271. The E(x7)E glycosyltransferase motif signature appears at 263–271; it reads EGFGLTVLE.

It belongs to the glycosyltransferase group 1 family. Glycosyltransferase 4 subfamily.

The protein resides in the membrane. It functions in the pathway bacterial outer membrane biogenesis; LPS O-antigen biosynthesis. In terms of biological role, involved in the assembly of the O-repeating unit during O-antigen biosynthesis. N-acetylglucosamine transferase accountable for the alpha-D-GlcNAc-1,4-beta-D-Gal linkage within the O-antigen. The chain is O-antigen biosynthesis glycosyltransferase WclY from Escherichia coli.